The sequence spans 444 residues: Trigger factor (444 aa).

The PPIase FKBP-type domain occupies 163–248; the sequence is GDIAVIDSPV…VKELRKNVPA (86 aa).

It belongs to the FKBP-type PPIase family. Tig subfamily.

The protein localises to the cytoplasm. The enzyme catalyses [protein]-peptidylproline (omega=180) = [protein]-peptidylproline (omega=0). In terms of biological role, involved in protein export. Acts as a chaperone by maintaining the newly synthesized protein in an open conformation. Functions as a peptidyl-prolyl cis-trans isomerase. The chain is Trigger factor (tig) from Azospirillum brasilense.